A 99-amino-acid chain; its full sequence is Malonate decarboxylase acyl carrier protein (99 aa).

S25 carries the post-translational modification O-(phosphoribosyl dephospho-coenzyme A)serine.

This sequence belongs to the MdcC family. In terms of processing, covalently binds the prosthetic group of malonate decarboxylase.

The protein resides in the cytoplasm. Its function is as follows. Subunit of malonate decarboxylase, it is an acyl carrier protein to which acetyl and malonyl thioester residues are bound via a 2'-(5''-phosphoribosyl)-3'-dephospho-CoA prosthetic group and turn over during the catalytic mechanism. The sequence is that of Malonate decarboxylase acyl carrier protein from Pseudomonas aeruginosa (strain UCBPP-PA14).